Here is a 104-residue protein sequence, read N- to C-terminus: DNA-directed RNA polymerase subunit Rpo13 (104 aa).

2 disordered regions span residues 1-34 (MVSG…EEFP) and 76-104 (EKRD…SVEG). Acidic residues predominate over residues 7–31 (TEEEKEGTNDEEVSEEREVEETSEE). Residue E32 participates in DNA binding. Positions 80-104 (SRRKAKKAASKKVKKTKKKEKSVEG) are enriched in basic residues. Positions 81 to 104 (RRKAKKAASKKVKKTKKKEKSVEG) are required to bind DNA.

It belongs to the archaeal Rpo13 RNA polymerase subunit family. In terms of assembly, part of the 13-subunit RNA polymerase complex. Rpo1N and Rpo5 form a cleft which docks Rpo13. Forms predominantly dimers in solution, although monomers and trimers can also be seen. Found associated with RNAP but also as a homodimer pool in the cytoplasm in vivo.

Its subcellular location is the cytoplasm. The enzyme catalyses RNA(n) + a ribonucleoside 5'-triphosphate = RNA(n+1) + diphosphate. DNA-dependent RNA polymerase (RNAP) catalyzes the transcription of DNA into RNA using the four ribonucleoside triphosphates as substrates. A molten-globule protein, it binds dsDNA in the RNAP, in vitro binds dsDNA but not ssDNA. Its position in RNAP implies it functions in both transcription initiation and elongation. The sequence is that of DNA-directed RNA polymerase subunit Rpo13 from Saccharolobus shibatae (strain ATCC 51178 / DSM 5389 / JCM 8931 / NBRC 15437 / B12) (Sulfolobus shibatae).